We begin with the raw amino-acid sequence, 483 residues long: Prenyltransferase vrtC (483 aa).

Belongs to the tryptophan dimethylallyltransferase family.

It participates in secondary metabolite biosynthesis; terpenoid biosynthesis. Its function is as follows. Prenyltransferase; part of the gene cluster that mediates the biosynthesis of viridicatumtoxin, a tetracycline-like fungal meroterpenoid with a unique, fused spirobicyclic ring system. The first step of the pathway is the production of the malonamoyl-CoA starter unit for the polyketide synthase vrtA. The aldolase vrtJ may be involved in the synthesis of the malonamate substrate for malonamoyl-CoA synthetase vrtB. The polyketide synthase vrtA then may utilize the malonamoyl-CoA starter unit, followed by sequential condensation of eight malonyl-CoA units to form the polyketide backbone. The cyclization of the last ring could be mediated by the lactamase-like protein vrtG. The proposed post-PKS tailoring steps are a hydroxylation at C5 catalyzed the cytochrome P450 monooxygenase vrtE, a hydroxylation at C12a catalyzed by VrtH and/or VrtI, and an O-methylation by the O-methyltransferase vrtF. VrtC is then proposed to catalyze the transfer of a geranyl group synthesized by vrtD to the aromatic C ring of the tetracyclic polyketide intermediate of viridicatumtoxin to yield previridicatumtoxin. Finally, the cytochrome P450 monooxygenase vrtK catalyzes the spirocyclization of the geranyl moiety of previridicatumtoxin to afford viridicatumtoxin. In Penicillium aethiopicum, this protein is Prenyltransferase vrtC.